Here is an 874-residue protein sequence, read N- to C-terminus: Alanine--tRNA ligase (874 aa).

4 residues coordinate Zn(2+): H564, H568, C665, and H669.

This sequence belongs to the class-II aminoacyl-tRNA synthetase family. Requires Zn(2+) as cofactor.

The protein resides in the cytoplasm. The enzyme catalyses tRNA(Ala) + L-alanine + ATP = L-alanyl-tRNA(Ala) + AMP + diphosphate. Catalyzes the attachment of alanine to tRNA(Ala) in a two-step reaction: alanine is first activated by ATP to form Ala-AMP and then transferred to the acceptor end of tRNA(Ala). Also edits incorrectly charged Ser-tRNA(Ala) and Gly-tRNA(Ala) via its editing domain. The polypeptide is Alanine--tRNA ligase (Burkholderia cenocepacia (strain HI2424)).